The following is a 160-amino-acid chain: Phosphatidylinositol N-acetylglucosaminyltransferase subunit gpi15 (160 aa).

The next 2 membrane-spanning stretches (helical) occupy residues 22–42 (GTQM…SLAI) and 48–68 (IIIT…ISGV).

It belongs to the PIGH family.

The protein localises to the endoplasmic reticulum membrane. The catalysed reaction is a 1,2-diacyl-sn-glycero-3-phospho-(1D-myo-inositol) + UDP-N-acetyl-alpha-D-glucosamine = a 6-(N-acetyl-alpha-D-glucosaminyl)-1-(1,2-diacyl-sn-glycero-3-phospho)-1D-myo-inositol + UDP + H(+). The protein operates within glycolipid biosynthesis; glycosylphosphatidylinositol-anchor biosynthesis. In terms of biological role, part of the complex catalyzing the transfer of N-acetylglucosamine from UDP-N-acetylglucosamine to phosphatidylinositol, the first step of GPI biosynthesis. The polypeptide is Phosphatidylinositol N-acetylglucosaminyltransferase subunit gpi15 (gpi15) (Schizosaccharomyces pombe (strain 972 / ATCC 24843) (Fission yeast)).